The chain runs to 238 residues: MGRAYQNRKDSIAKTANAKSKVYSRYGREIYVCAKQGGGDPDGNLALRGLIDRAKKDQVPAHVIEKAIDKAQGGAGEDFSPARYEGYGPSNCMVIVECLTDNPNRTFGDVRNCFTKSKSKIGAQGSVAHSFDHCAIFAFRHDNEDEVLEAMMEADVDVTDVEFEDGLVTVFAPNTEYAAARQALTHAFPDIDFEADEIQFLPQVTTSIAEDDLPMFERLMDMLNDLDDVQNIYHNAEH.

The protein belongs to the TACO1 family.

It is found in the cytoplasm. This is Probable transcriptional regulatory protein IL0164 from Idiomarina loihiensis (strain ATCC BAA-735 / DSM 15497 / L2-TR).